A 209-amino-acid chain; its full sequence is Thiamine-phosphate synthase (209 aa).

Residues 40 to 44 (QLREK) and asparagine 72 contribute to the 4-amino-2-methyl-5-(diphosphooxymethyl)pyrimidine site. Aspartate 73 and aspartate 92 together coordinate Mg(2+). Serine 111 serves as a coordination point for 4-amino-2-methyl-5-(diphosphooxymethyl)pyrimidine. A 2-[(2R,5Z)-2-carboxy-4-methylthiazol-5(2H)-ylidene]ethyl phosphate-binding site is contributed by 137–139 (TNS). Lysine 140 contributes to the 4-amino-2-methyl-5-(diphosphooxymethyl)pyrimidine binding site. 2-[(2R,5Z)-2-carboxy-4-methylthiazol-5(2H)-ylidene]ethyl phosphate is bound by residues glycine 167 and 187-188 (IS).

Belongs to the thiamine-phosphate synthase family. It depends on Mg(2+) as a cofactor.

It catalyses the reaction 2-[(2R,5Z)-2-carboxy-4-methylthiazol-5(2H)-ylidene]ethyl phosphate + 4-amino-2-methyl-5-(diphosphooxymethyl)pyrimidine + 2 H(+) = thiamine phosphate + CO2 + diphosphate. The catalysed reaction is 2-(2-carboxy-4-methylthiazol-5-yl)ethyl phosphate + 4-amino-2-methyl-5-(diphosphooxymethyl)pyrimidine + 2 H(+) = thiamine phosphate + CO2 + diphosphate. The enzyme catalyses 4-methyl-5-(2-phosphooxyethyl)-thiazole + 4-amino-2-methyl-5-(diphosphooxymethyl)pyrimidine + H(+) = thiamine phosphate + diphosphate. Its pathway is cofactor biosynthesis; thiamine diphosphate biosynthesis; thiamine phosphate from 4-amino-2-methyl-5-diphosphomethylpyrimidine and 4-methyl-5-(2-phosphoethyl)-thiazole: step 1/1. Its function is as follows. Condenses 4-methyl-5-(beta-hydroxyethyl)thiazole monophosphate (THZ-P) and 2-methyl-4-amino-5-hydroxymethyl pyrimidine pyrophosphate (HMP-PP) to form thiamine monophosphate (TMP). The sequence is that of Thiamine-phosphate synthase from Clostridium tetani (strain Massachusetts / E88).